The chain runs to 216 residues: Guanylate kinase (216 aa).

Residues 12–191 (GLLFVISSPS…CVKQVKNILT (180 aa)) form the Guanylate kinase-like domain. 19-26 (SPSGAGKS) is an ATP binding site.

The protein belongs to the guanylate kinase family.

It localises to the cytoplasm. The enzyme catalyses GMP + ATP = GDP + ADP. Its function is as follows. Essential for recycling GMP and indirectly, cGMP. The protein is Guanylate kinase of Zymomonas mobilis subsp. mobilis (strain ATCC 31821 / ZM4 / CP4).